Here is a 270-residue protein sequence, read N- to C-terminus: Dihydroorotate dehydrogenase B (NAD(+)), catalytic subunit (270 aa).

FMN is bound by residues S12 and 35-36 (KT). Substrate contacts are provided by residues K35, 59–63 (NRIGL), and N114. Position 114 (N114) interacts with FMN. C117 acts as the Nucleophile in catalysis. Positions 153 and 179 each coordinate FMN. 180–181 (NT) lines the substrate pocket. Residues G199, 226-227 (GG), and 248-249 (GS) contribute to the FMN site.

The protein belongs to the dihydroorotate dehydrogenase family. Type 1 subfamily. As to quaternary structure, heterotetramer of 2 PyrK and 2 PyrD type B subunits. It depends on FMN as a cofactor.

The protein localises to the cytoplasm. The catalysed reaction is (S)-dihydroorotate + NAD(+) = orotate + NADH + H(+). Its pathway is pyrimidine metabolism; UMP biosynthesis via de novo pathway; orotate from (S)-dihydroorotate (NAD(+) route): step 1/1. Functionally, catalyzes the conversion of dihydroorotate to orotate with NAD(+) as electron acceptor. The chain is Dihydroorotate dehydrogenase B (NAD(+)), catalytic subunit (pyrD) from Thermotoga maritima (strain ATCC 43589 / DSM 3109 / JCM 10099 / NBRC 100826 / MSB8).